The sequence spans 268 residues: Hydroxyacylglutathione hydrolase (268 aa).

7 residues coordinate Zn(2+): His-56, His-58, Asp-60, His-61, His-112, Asp-137, and His-176. His-176 to Tyr-178 contributes to the substrate binding site.

It belongs to the metallo-beta-lactamase superfamily. Glyoxalase II family. In terms of assembly, monomer. It depends on Zn(2+) as a cofactor.

It catalyses the reaction an S-(2-hydroxyacyl)glutathione + H2O = a 2-hydroxy carboxylate + glutathione + H(+). The protein operates within secondary metabolite metabolism; methylglyoxal degradation; (R)-lactate from methylglyoxal: step 2/2. Its function is as follows. Thiolesterase that catalyzes the hydrolysis of S-D-lactoyl-glutathione to form glutathione and D-lactic acid. The chain is Hydroxyacylglutathione hydrolase (hagh) from Dictyostelium discoideum (Social amoeba).